Here is a 424-residue protein sequence, read N- to C-terminus: Serine hydroxymethyltransferase (424 aa).

(6S)-5,6,7,8-tetrahydrofolate-binding positions include Leu-123 and 127 to 129 (GHL). The residue at position 232 (Lys-232) is an N6-(pyridoxal phosphate)lysine. Glu-245 is a (6S)-5,6,7,8-tetrahydrofolate binding site.

It belongs to the SHMT family. In terms of assembly, homodimer. Requires pyridoxal 5'-phosphate as cofactor.

It localises to the cytoplasm. The enzyme catalyses (6R)-5,10-methylene-5,6,7,8-tetrahydrofolate + glycine + H2O = (6S)-5,6,7,8-tetrahydrofolate + L-serine. It participates in one-carbon metabolism; tetrahydrofolate interconversion. It functions in the pathway amino-acid biosynthesis; glycine biosynthesis; glycine from L-serine: step 1/1. In terms of biological role, catalyzes the reversible interconversion of serine and glycine with tetrahydrofolate (THF) serving as the one-carbon carrier. This reaction serves as the major source of one-carbon groups required for the biosynthesis of purines, thymidylate, methionine, and other important biomolecules. Also exhibits THF-independent aldolase activity toward beta-hydroxyamino acids, producing glycine and aldehydes, via a retro-aldol mechanism. The protein is Serine hydroxymethyltransferase of Kocuria rhizophila (strain ATCC 9341 / DSM 348 / NBRC 103217 / DC2201).